The sequence spans 159 residues: Putative ribosomal RNA large subunit methyltransferase H (159 aa).

Residues L76, G108, and 127–132 contribute to the S-adenosyl-L-methionine site; that span reads FSKMTF.

This sequence belongs to the RNA methyltransferase RlmH family.

Its subcellular location is the cytoplasm. The catalysed reaction is pseudouridine(1915) in 23S rRNA + S-adenosyl-L-methionine = N(3)-methylpseudouridine(1915) in 23S rRNA + S-adenosyl-L-homocysteine + H(+). Functionally, specifically methylates the pseudouridine at position 1915 (m3Psi1915) in 23S rRNA. This Methanococcus vannielii (strain ATCC 35089 / DSM 1224 / JCM 13029 / OCM 148 / SB) protein is Putative ribosomal RNA large subunit methyltransferase H.